Here is a 454-residue protein sequence, read N- to C-terminus: tRNA-2-methylthio-N(6)-dimethylallyladenosine synthase (454 aa).

Residues Arg-6–Ala-122 enclose the MTTase N-terminal domain. [4Fe-4S] cluster is bound by residues Cys-15, Cys-51, Cys-85, Cys-157, Cys-161, and Cys-164. Residues Arg-143–Glu-380 form the Radical SAM core domain. The 65-residue stretch at Gln-383–Glu-447 folds into the TRAM domain.

This sequence belongs to the methylthiotransferase family. MiaB subfamily. Monomer. Requires [4Fe-4S] cluster as cofactor.

Its subcellular location is the cytoplasm. It catalyses the reaction N(6)-dimethylallyladenosine(37) in tRNA + (sulfur carrier)-SH + AH2 + 2 S-adenosyl-L-methionine = 2-methylsulfanyl-N(6)-dimethylallyladenosine(37) in tRNA + (sulfur carrier)-H + 5'-deoxyadenosine + L-methionine + A + S-adenosyl-L-homocysteine + 2 H(+). Catalyzes the methylthiolation of N6-(dimethylallyl)adenosine (i(6)A), leading to the formation of 2-methylthio-N6-(dimethylallyl)adenosine (ms(2)i(6)A) at position 37 in tRNAs that read codons beginning with uridine. The polypeptide is tRNA-2-methylthio-N(6)-dimethylallyladenosine synthase (Nostoc sp. (strain PCC 7120 / SAG 25.82 / UTEX 2576)).